We begin with the raw amino-acid sequence, 327 residues long: tRNA dimethylallyltransferase (327 aa).

ATP is bound at residue 14 to 21 (GPTASGKT). 16-21 (TASGKT) serves as a coordination point for substrate. 2 interaction with substrate tRNA regions span residues 39-42 (DSAL) and 163-167 (QRIQR).

It belongs to the IPP transferase family. Monomer. It depends on Mg(2+) as a cofactor.

It catalyses the reaction adenosine(37) in tRNA + dimethylallyl diphosphate = N(6)-dimethylallyladenosine(37) in tRNA + diphosphate. In terms of biological role, catalyzes the transfer of a dimethylallyl group onto the adenine at position 37 in tRNAs that read codons beginning with uridine, leading to the formation of N6-(dimethylallyl)adenosine (i(6)A). The sequence is that of tRNA dimethylallyltransferase from Xanthomonas oryzae pv. oryzae (strain MAFF 311018).